Consider the following 438-residue polypeptide: MAKRLFVKTYGCQMNVYDSARMADVLAPLGYGPADHAEEADMVILNTCHIREKAAEKVFSELGRLRKLQAAKAEAGGRMILAVAGCVAQAEGEEILRRAPFVDIVLGPQTYHRLPEMVAQAARAGGAVLDTEFPAEPKFDFLPEPHAEGTSAFLSVQEGCDKFCTFCVVPYTRGAEYSRPAAAVLAEAATLAAGGVREITLLGQNVNGWHGGEGWGLGRLIRALAEVEGVERIRYTTSHPRDMDDELIRAHAELPQLMPFLHLPVQSGSDRILAAMNRGHDRDTYLRLVDKLKSACPDLALSSDFIVGFPGESDADFEASMDLIRRVGFVQTYSFKYSPRPGTPAAAMETQVPEAVKDERLAQVQALLLDQTMRFNHACVGREMRILLDRPGRHAGQLLGRSPYMQPVHVKAAAHLIGTVVPLRITKVHPNSLEAVPA.

The MTTase N-terminal domain maps to 3–123; sequence KRLFVKTYGC…LPEMVAQAAR (121 aa). Cys12, Cys48, Cys86, Cys160, Cys164, and Cys167 together coordinate [4Fe-4S] cluster. The Radical SAM core domain occupies 146 to 374; it reads HAEGTSAFLS…QALLLDQTMR (229 aa). A TRAM domain is found at 377–438; the sequence is HACVGREMRI…HPNSLEAVPA (62 aa).

It belongs to the methylthiotransferase family. MiaB subfamily. As to quaternary structure, monomer. [4Fe-4S] cluster serves as cofactor.

The protein localises to the cytoplasm. The enzyme catalyses N(6)-dimethylallyladenosine(37) in tRNA + (sulfur carrier)-SH + AH2 + 2 S-adenosyl-L-methionine = 2-methylsulfanyl-N(6)-dimethylallyladenosine(37) in tRNA + (sulfur carrier)-H + 5'-deoxyadenosine + L-methionine + A + S-adenosyl-L-homocysteine + 2 H(+). In terms of biological role, catalyzes the methylthiolation of N6-(dimethylallyl)adenosine (i(6)A), leading to the formation of 2-methylthio-N6-(dimethylallyl)adenosine (ms(2)i(6)A) at position 37 in tRNAs that read codons beginning with uridine. The polypeptide is tRNA-2-methylthio-N(6)-dimethylallyladenosine synthase (Paramagnetospirillum magneticum (strain ATCC 700264 / AMB-1) (Magnetospirillum magneticum)).